The chain runs to 181 residues: ATP synthase subunit b (181 aa).

A helical transmembrane segment spans residues Leu24 to Val44.

It belongs to the ATPase B chain family. As to quaternary structure, F-type ATPases have 2 components, F(1) - the catalytic core - and F(0) - the membrane proton channel. F(1) has five subunits: alpha(3), beta(3), gamma(1), delta(1), epsilon(1). F(0) has three main subunits: a(1), b(2) and c(10-14). The alpha and beta chains form an alternating ring which encloses part of the gamma chain. F(1) is attached to F(0) by a central stalk formed by the gamma and epsilon chains, while a peripheral stalk is formed by the delta and b chains.

The protein resides in the cell membrane. F(1)F(0) ATP synthase produces ATP from ADP in the presence of a proton or sodium gradient. F-type ATPases consist of two structural domains, F(1) containing the extramembraneous catalytic core and F(0) containing the membrane proton channel, linked together by a central stalk and a peripheral stalk. During catalysis, ATP synthesis in the catalytic domain of F(1) is coupled via a rotary mechanism of the central stalk subunits to proton translocation. Functionally, component of the F(0) channel, it forms part of the peripheral stalk, linking F(1) to F(0). This chain is ATP synthase subunit b, found in Mycoplasma capricolum subsp. capricolum (strain California kid / ATCC 27343 / NCTC 10154).